The chain runs to 514 residues: AAA-ATPase ASD, mitochondrial (514 aa).

The chain crosses the membrane as a helical span at residues 7-24; it reads VWTNTGSALASLVFIYTI. Residue 250–257 participates in ATP binding; the sequence is GPPGTGKS. Disordered stretches follow at residues 311–342 and 467–514; these read GQRK…ENKG and KEEA…TMKD. Composition is skewed to basic and acidic residues over residues 331 to 342 and 467 to 502; these read KQMKKDQGENKG and KEEA…KEEK.

It belongs to the AAA ATPase family. BCS1 subfamily. The cofactor is Mg(2+). As to expression, expressed in seeds, specifically in the embryo.

The protein localises to the mitochondrion membrane. The catalysed reaction is ATP + H2O = ADP + phosphate + H(+). Its function is as follows. Required to regulate morphology and anatomy during seed maturation. The polypeptide is AAA-ATPase ASD, mitochondrial (AATP1) (Arabidopsis thaliana (Mouse-ear cress)).